Reading from the N-terminus, the 873-residue chain is Probable beta-glucosidase A (873 aa).

The signal sequence occupies residues 1–19; sequence MRFGWLEVAALTAASVANA. Residues Asn71, Asn222, and Asn263 are each glycosylated (N-linked (GlcNAc...) asparagine). The active site involves Asp291. N-linked (GlcNAc...) asparagine glycans are attached at residues Asn326, Asn333, Asn365, Asn453, Asn534, Asn553, Asn575, Asn679, and Asn725. Residues 731–764 are disordered; that stretch reads DSSDDPNYGWQDSEYIPEGARDGSPQPLLKAGGA.

The protein belongs to the glycosyl hydrolase 3 family.

Its subcellular location is the secreted. The enzyme catalyses Hydrolysis of terminal, non-reducing beta-D-glucosyl residues with release of beta-D-glucose.. It functions in the pathway glycan metabolism; cellulose degradation. In terms of biological role, beta-glucosidases are one of a number of cellulolytic enzymes involved in the degradation of cellulosic biomass. Catalyzes the last step releasing glucose from the inhibitory cellobiose. This Aspergillus fumigatus (strain ATCC MYA-4609 / CBS 101355 / FGSC A1100 / Af293) (Neosartorya fumigata) protein is Probable beta-glucosidase A (bglA).